The following is a 219-amino-acid chain: Cytochrome b6 (219 aa).

Residues 32–52 (IFYCFGGIVLTCFIIQAATGF) traverse the membrane as a helical segment. C35 serves as a coordination point for heme c. 2 residues coordinate heme b: H86 and H100. 3 helical membrane-spanning segments follow: residues 90-110 (SGLM…TAGF), 116-136 (LTWI…VTGY), and 190-210 (AHTF…FLMI). Heme b contacts are provided by H191 and H206.

Belongs to the cytochrome b family. PetB subfamily. As to quaternary structure, the 4 large subunits of the cytochrome b6-f complex are cytochrome b6, subunit IV (17 kDa polypeptide, PetD), cytochrome f and the Rieske protein, while the 4 small subunits are PetG, PetL, PetM and PetN. The complex functions as a dimer. Requires heme b as cofactor. Heme c serves as cofactor.

The protein localises to the plastid. Its subcellular location is the chloroplast thylakoid membrane. Functionally, component of the cytochrome b6-f complex, which mediates electron transfer between photosystem II (PSII) and photosystem I (PSI), cyclic electron flow around PSI, and state transitions. This chain is Cytochrome b6, found in Amphidinium operculatum (Dinoflagellate).